Consider the following 435-residue polypeptide: GTPase Obg (435 aa).

The region spanning 6 to 164 (ADFVDRVKIF…RWLELELKIL (159 aa)) is the Obg domain. Residues 165-335 (ADVGLVGYPN…LVSKLASIVR (171 aa)) enclose the OBG-type G domain. GTP is bound by residues 171–178 (GYPNVGKS), 196–200 (FTTLI), 217–220 (DIPG), 287–290 (NKID), and 316–318 (SAV). Positions 178 and 198 each coordinate Mg(2+). An OCT domain is found at 357–435 (RRLPEKFHLE…IGDFEFEYRE (79 aa)).

It belongs to the TRAFAC class OBG-HflX-like GTPase superfamily. OBG GTPase family. In terms of assembly, monomer. Requires Mg(2+) as cofactor.

It is found in the cytoplasm. An essential GTPase which binds GTP, GDP and possibly (p)ppGpp with moderate affinity, with high nucleotide exchange rates and a fairly low GTP hydrolysis rate. Plays a role in control of the cell cycle, stress response, ribosome biogenesis and in those bacteria that undergo differentiation, in morphogenesis control. The polypeptide is GTPase Obg (Thermotoga petrophila (strain ATCC BAA-488 / DSM 13995 / JCM 10881 / RKU-1)).